The primary structure comprises 302 residues: NAD kinase 1 (302 aa).

Asp-67 acts as the Proton acceptor in catalysis. NAD(+) is bound by residues 67–68 (DG), Arg-72, 148–149 (ND), Lys-178, and Asp-180.

This sequence belongs to the NAD kinase family. It depends on a divalent metal cation as a cofactor.

It localises to the cytoplasm. It catalyses the reaction NAD(+) + ATP = ADP + NADP(+) + H(+). Its function is as follows. Involved in the regulation of the intracellular balance of NAD and NADP, and is a key enzyme in the biosynthesis of NADP. Catalyzes specifically the phosphorylation on 2'-hydroxyl of the adenosine moiety of NAD to yield NADP. The polypeptide is NAD kinase 1 (Prochlorococcus marinus (strain NATL2A)).